A 520-amino-acid chain; its full sequence is GMP synthase [glutamine-hydrolyzing] (520 aa).

Residues lysine 9 to glutamine 202 form the Glutamine amidotransferase type-1 domain. Catalysis depends on cysteine 86, which acts as the Nucleophile. Residues histidine 176 and glutamate 178 contribute to the active site. In terms of domain architecture, GMPS ATP-PPase spans tryptophan 203–arginine 395. ATP is bound at residue serine 230–serine 236.

In terms of assembly, homodimer.

The catalysed reaction is XMP + L-glutamine + ATP + H2O = GMP + L-glutamate + AMP + diphosphate + 2 H(+). It functions in the pathway purine metabolism; GMP biosynthesis; GMP from XMP (L-Gln route): step 1/1. Catalyzes the synthesis of GMP from XMP. This is GMP synthase [glutamine-hydrolyzing] from Geobacter metallireducens (strain ATCC 53774 / DSM 7210 / GS-15).